The primary structure comprises 65 residues: Large ribosomal subunit protein uL29 (65 aa).

Belongs to the universal ribosomal protein uL29 family.

This Buchnera aphidicola subsp. Acyrthosiphon pisum (strain 5A) protein is Large ribosomal subunit protein uL29.